Consider the following 85-residue polypeptide: Large ribosomal subunit protein eL34 (85 aa).

This sequence belongs to the eukaryotic ribosomal protein eL34 family.

The sequence is that of Large ribosomal subunit protein eL34 from Saccharolobus islandicus (strain Y.N.15.51 / Yellowstone #2) (Sulfolobus islandicus).